Reading from the N-terminus, the 311-residue chain is Ribosomal RNA small subunit methyltransferase H (311 aa).

Residues Gly33–His35, Asp53, Phe77, Asp98, and Gln105 each bind S-adenosyl-L-methionine.

Belongs to the methyltransferase superfamily. RsmH family.

Its subcellular location is the cytoplasm. It carries out the reaction cytidine(1402) in 16S rRNA + S-adenosyl-L-methionine = N(4)-methylcytidine(1402) in 16S rRNA + S-adenosyl-L-homocysteine + H(+). Functionally, specifically methylates the N4 position of cytidine in position 1402 (C1402) of 16S rRNA. The chain is Ribosomal RNA small subunit methyltransferase H from Thiobacillus denitrificans (strain ATCC 25259 / T1).